A 635-amino-acid polypeptide reads, in one-letter code: MLNRVQILMKTANNYETIEILRNYLRLYIILARNEEGHGILIYDDNIDSIMSMMNITRLEVIGLTTHCTKLRSSPPIPMSRLFMDEIDHESYYSPKTSDYPLIDIIRKRSHEQGDIALALKRYCIENTDSISEINEWLSSKGLACYRFVKFNDYRKQMYRKFSKCTIVDSMIIGHIGHHYIWIKNLETYTRPEIDVLPFDIKYISRDELWAQISSSLDQTHIKTITVSVYGAITDNGPMPYMISTYPGNTFVNFNSVKDLILNFLDWIKDIMTSTRTIILVGYMSNLFDIPLLTVYWPNNCGWKIYNNILISSDGARVIWMDAYKFSCGLSLQDYCYHWGSKPESRPFDLIKKIDAKRNIKSWVKESMTSLKSLYEAFETQSGALEVLMSPCRMFSFSRIEDMFLTSVINRVSKNTGMGMYYPTNDISSLFIESSICLDYIIVNNQKSNKYRIKSVLDIISSKQYPAGRPNYVKNGTKGKLYIALCKVTVPTNDHIPVVYHDDDNTTTFITVLTSVDIETATRAGYSIVELGALQWDDNIPELKDCLLDSIKMIYDLNTVTTNNLLEQLIENINFNNSSIILLFYTFAISYCRAFIYSIMETIDPVYISQFSYKELYIRSSYKDINEVMSQMVKL.

This sequence belongs to the orthopoxvirus OPG056 family. As to quaternary structure, interacts with protein OPG164. Interacts with protein OPG064.

Its subcellular location is the virion membrane. It localises to the host endosome. Its function is as follows. Plays a role in intracellular enveloped virus (IEV) transport to the cell surface through microtubule transport. Together with protein OPG064, forms a complex that interacts with host KLC2 (kinesin light chain isoform 2) to engage the kinesin-1 complex and thereby promote IEV trafficking. The sequence is that of Protein OPG056 (OPG056) from Variola virus (isolate Human/India/Ind3/1967) (VARV).